We begin with the raw amino-acid sequence, 627 residues long: Carene synthase 2, chloroplastic (627 aa).

A chloroplast-targeting transit peptide spans 1–36 (MSVISIVPLASKSCLYKSLMSSTHELKALCRPIVTL). Mg(2+)-binding residues include Asp-378, Asp-382, and Asp-530. Positions 378–382 (DDMYD) match the DDXXD motif motif.

Belongs to the terpene synthase family. Tpsd subfamily. The cofactor is Mg(2+). Mn(2+) serves as cofactor.

The protein localises to the plastid. The protein resides in the chloroplast. The catalysed reaction is (2E)-geranyl diphosphate = (+)-car-3-ene + diphosphate. It participates in terpene metabolism; oleoresin biosynthesis. Its function is as follows. Terpene synthase (TPS) involved in defensive oleoresin formation in conifers in response to insect attack (e.g. white pine weevil P.strobi) or other injury. In Picea sitchensis (Sitka spruce), this protein is Carene synthase 2, chloroplastic (TPS-3car2).